Consider the following 814-residue polypeptide: G-type lectin S-receptor-like serine/threonine-protein kinase At1g61400 (814 aa).

The N-terminal stretch at 1 to 34 is a signal peptide; that stretch reads MDFLFLLLERKNKHMGKKRVVLLWLSIFISFSSA. A Bulb-type lectin domain is found at 35-154; that stretch reads EITEESPLSI…VSGRTLWESF (120 aa). Residues 35–436 lie on the Extracellular side of the membrane; it reads EITEESPLSI…ELDVNKRKKT (402 aa). N63, N104, N127, and N246 each carry an N-linked (GlcNAc...) asparagine glycan. Residues 288–324 form the EGF-like; atypical domain; the sequence is PANSCDIYGVCGPFGFCVISVPPKCKCFKGFIPKSIE. Cystine bridges form between C292-C304 and C298-C312. 3 N-linked (GlcNAc...) asparagine glycosylation sites follow: N330, N346, and N385. Residues 343–425 form the PAN domain; the sequence is CQGNSTGKDA…GELLSIRLAR (83 aa). 2 cysteine pairs are disulfide-bonded: C378/C399 and C382/C388. The helical transmembrane segment at 437-457 threads the bilayer; it reads IIAITVSLTLFVILGFTAFGF. Topologically, residues 458–814 are cytoplasmic; it reads WRRRVEQNAL…EMTESVIHGR (357 aa). In terms of domain architecture, Protein kinase spans 500–785; it reads FSLSNKLGHG…DLPLPKQPTF (286 aa). Residues 506 to 514 and K528 contribute to the ATP site; that span reads LGHGGFGSV. Phosphoserine is present on residues S534 and S549. The interval 589–606 is caM-binding; sequence KKRLEIDWPKRFDIIQGI. The Proton acceptor role is filled by D625. A phosphoserine mark is found at S629 and S642. Position 659 is a phosphothreonine (T659). S702 and S796 each carry phosphoserine.

The protein belongs to the protein kinase superfamily. Ser/Thr protein kinase family.

The protein resides in the cell membrane. The catalysed reaction is L-seryl-[protein] + ATP = O-phospho-L-seryl-[protein] + ADP + H(+). It catalyses the reaction L-threonyl-[protein] + ATP = O-phospho-L-threonyl-[protein] + ADP + H(+). The polypeptide is G-type lectin S-receptor-like serine/threonine-protein kinase At1g61400 (Arabidopsis thaliana (Mouse-ear cress)).